A 633-amino-acid polypeptide reads, in one-letter code: Transcriptional repressor p66-alpha (633 aa).

Over residues 1 to 18 (MTEEACRTRSQKRALERD) the composition is skewed to basic and acidic residues. Disordered regions lie at residues 1–59 (MTEE…PTQG) and 73–119 (RGEG…RVNG). A phosphothreonine mark is found at threonine 20 and threonine 49. Residues 86-99 (RTSHSDMKSERRPP) are compositionally biased toward basic and acidic residues. A Glycyl lysine isopeptide (Lys-Gly) (interchain with G-Cter in SUMO2) cross-link involves residue lysine 93. A phosphoserine mark is found at serine 100, serine 107, serine 113, serine 114, and serine 137. A compositionally biased stretch (polar residues) spans 108–119 (DNEQPSSPRVNG). The stretch at 139 to 174 (EERERMIKQLKEELRLEEAKLVLLKKLRQSQIQKEA) forms a coiled coil. A CR1; interaction with HDAC1, HDAC2, MBD2 and MTA2 region spans residues 144–178 (MIKQLKEELRLEEAKLVLLKKLRQSQIQKEATAQK). Positions 172–188 (KEATAQKPTGSVGSTVT) are enriched in polar residues. The disordered stretch occupies residues 172 to 238 (KEATAQKPTG…QASSKLGPQA (67 aa)). Lysine 178 is covalently cross-linked (Glycyl lysine isopeptide (Lys-Gly) (interchain with G-Cter in SUMO2)). Positions 181 to 295 (GSVGSTVTTP…IIQQGLIRVA (115 aa)) are interaction with ZMYND8. The residue at position 189 (threonine 189) is a Phosphothreonine. Over residues 196 to 212 (GTQNIPAGKPSLQTSSA) the composition is skewed to polar residues. Residue lysine 204 forms a Glycyl lysine isopeptide (Lys-Gly) (interchain with G-Cter in SUMO2) linkage. Arginine 225 is subject to Omega-N-methylarginine. Polar residues predominate over residues 228–238 (QQASSKLGPQA). Residue lysine 233 forms a Glycyl lysine isopeptide (Lys-Gly) (interchain with G-Cter in SUMO2) linkage. Omega-N-methylarginine occurs at positions 249, 258, and 273. Phosphoserine is present on serine 275. Arginine 285 is subject to Omega-N-methylarginine. Residues serine 340 and serine 343 each carry the phosphoserine modification. The tract at residues 340 to 480 (SPASRQAAAK…EIEQRLLQQG (141 aa)) is CR2; histone tail-binding and interaction with CHD4 and CDK2AP1. The GATA-type zinc-finger motif lies at 411–464 (SREPYMCAQCKTDFTCRWREEKSGAIMCENCMTTNQKKALKVEHTSRLKAAFVK). Glycyl lysine isopeptide (Lys-Gly) (interchain with G-Cter in SUMO2) cross-links involve residues lysine 464 and lysine 487. Residue serine 512 is modified to Phosphoserine. Arginine 539 carries the asymmetric dimethylarginine; alternate modification. Arginine 539 carries the omega-N-methylarginine; alternate modification. Phosphoserine occurs at positions 546 and 548. Lysine 550 participates in a covalent cross-link: Glycyl lysine isopeptide (Lys-Gly) (interchain with G-Cter in SUMO2). A Phosphoserine modification is found at serine 556. Positions 561–585 (VSRTGRHSERTVSAGKGSATSNWKK) are disordered. A Glycyl lysine isopeptide (Lys-Gly) (interchain with G-Cter in SUMO2) cross-link involves residue lysine 585. A Phosphoserine modification is found at serine 598. Lysine 605 participates in a covalent cross-link: Glycyl lysine isopeptide (Lys-Gly) (interchain with G-Cter in SUMO2).

Homooligomer. Component of the nucleosome remodeling and deacetylase (NuRD) repressor complex, composed of core proteins MTA1, MTA2, MTA3, RBBP4, RBBP7, HDAC1, HDAC2, MBD2, MBD3, and peripherally associated proteins CDK2AP1, CDK2AP2, GATAD2A, GATAD2B, CHD3, CHD4 and CHD5. The exact stoichiometry of the NuRD complex is unknown, and some subunits such as MBD2 and MBD3, GATAD2A and GATAD2B, and CHD3, CHD4 and CHD5 define mutually exclusive NuRD complexes. Component of the MeCP1 histone deacetylase complex. Interacts with CDK2AP1. Interacts with CHD4. Interacts with ERCC6. Interacts with HDAC1. Interacts with HDAC2. Interacts with MBD2; this interaction is required for the enhancement of MBD2-mediated repression and for targeting to the chromatin. Interacts with MBD3. Interacts with MTA2. Interacts with ZMYND8. Interacts with histone tails, including that of histones H2A, H2B, H3 and H4, the interaction is reduced by histone acetylation. Ubiquitous, both in fetal and adult tissues.

Its subcellular location is the nucleus speckle. It is found in the nucleus. It localises to the chromosome. Functionally, transcriptional repressor. Acts as a component of the histone deacetylase NuRD complex which participates in the remodeling of chromatin. Enhances MBD2-mediated repression. Efficient repression requires the presence of GATAD2B. The polypeptide is Transcriptional repressor p66-alpha (GATAD2A) (Homo sapiens (Human)).